Reading from the N-terminus, the 131-residue chain is Maturin (131 aa).

Tyr-34 bears the Phosphotyrosine mark. Positions 107-120 (FEEYSADVEEEEPE) are enriched in acidic residues. Residues 107-131 (FEEYSADVEEEEPEADHPQMGVSQQ) are disordered.

The protein belongs to the MTURN family. Phosphorylation at Tyr-34 is essential for its ability to promote megakaryocyte differentiation. Expressed in the thymus, bone marrow and spleen.

It localises to the cytoplasm. Its function is as follows. Promotes megakaryocyte differentiation by enhancing ERK and JNK signaling as well as up-regulating RUNX1 and FLI1 expression. Represses NF-kappa-B transcriptional activity by inhibiting phosphorylation of RELA at 'Ser- 536'. May be involved in early neuronal development. This is Maturin (Mturn) from Mus musculus (Mouse).